Consider the following 172-residue polypeptide: Large ribosomal subunit protein uL10 (172 aa).

Belongs to the universal ribosomal protein uL10 family. Part of the ribosomal stalk of the 50S ribosomal subunit. The N-terminus interacts with L11 and the large rRNA to form the base of the stalk. The C-terminus forms an elongated spine to which L12 dimers bind in a sequential fashion forming a multimeric L10(L12)X complex.

Its function is as follows. Forms part of the ribosomal stalk, playing a central role in the interaction of the ribosome with GTP-bound translation factors. This Clostridium tetani (strain Massachusetts / E88) protein is Large ribosomal subunit protein uL10.